Consider the following 294-residue polypeptide: N-acetylmuramic acid 6-phosphate etherase (294 aa).

The 164-residue stretch at 54 to 217 (VIQSFEEEGR…STASMIGVGK (164 aa)) folds into the SIS domain. The active-site Proton donor is the E82. E113 is a catalytic residue.

The protein belongs to the GCKR-like family. MurNAc-6-P etherase subfamily. Homodimer.

The catalysed reaction is N-acetyl-D-muramate 6-phosphate + H2O = N-acetyl-D-glucosamine 6-phosphate + (R)-lactate. The protein operates within amino-sugar metabolism; N-acetylmuramate degradation. Its function is as follows. Specifically catalyzes the cleavage of the D-lactyl ether substituent of MurNAc 6-phosphate, producing GlcNAc 6-phosphate and D-lactate. The sequence is that of N-acetylmuramic acid 6-phosphate etherase from Bacillus anthracis (strain A0248).